The primary structure comprises 288 residues: Ribosomal RNA small subunit methyltransferase A (288 aa).

S-adenosyl-L-methionine contacts are provided by asparagine 18, leucine 20, glycine 45, glutamate 66, aspartate 91, and asparagine 118.

Belongs to the class I-like SAM-binding methyltransferase superfamily. rRNA adenine N(6)-methyltransferase family. RsmA subfamily.

It is found in the cytoplasm. It carries out the reaction adenosine(1518)/adenosine(1519) in 16S rRNA + 4 S-adenosyl-L-methionine = N(6)-dimethyladenosine(1518)/N(6)-dimethyladenosine(1519) in 16S rRNA + 4 S-adenosyl-L-homocysteine + 4 H(+). Its function is as follows. Specifically dimethylates two adjacent adenosines (A1518 and A1519) in the loop of a conserved hairpin near the 3'-end of 16S rRNA in the 30S particle. May play a critical role in biogenesis of 30S subunits. The protein is Ribosomal RNA small subunit methyltransferase A of Pasteurella multocida (strain Pm70).